We begin with the raw amino-acid sequence, 171 residues long: Large ribosomal subunit protein uL10 (171 aa).

It belongs to the universal ribosomal protein uL10 family. As to quaternary structure, part of the ribosomal stalk of the 50S ribosomal subunit. The N-terminus interacts with L11 and the large rRNA to form the base of the stalk. The C-terminus forms an elongated spine to which L12 dimers bind in a sequential fashion forming a multimeric L10(L12)X complex.

Forms part of the ribosomal stalk, playing a central role in the interaction of the ribosome with GTP-bound translation factors. The sequence is that of Large ribosomal subunit protein uL10 from Phenylobacterium zucineum (strain HLK1).